The chain runs to 72 residues: MFIFFINTPTPPNIFFSKNIKIKKLMRFSCTEVCIFFSLIFFFFFFFFCVNWGCENNLLSRKYQMNRDTCNF.

The chain crosses the membrane as a helical span at residues 33–53 (VCIFFSLIFFFFFFFFCVNWG).

Its subcellular location is the membrane. This is an uncharacterized protein from Dictyostelium discoideum (Social amoeba).